A 466-amino-acid polypeptide reads, in one-letter code: Sushi repeat-containing protein SRPX2 (466 aa).

A signal peptide spans 1–24; the sequence is MKTGSLTQRGALLLLLLLAPAVTP. Sushi domains lie at 70 to 120, 121 to 179, and 263 to 322; these read ATCY…YCRQ, MRCH…VCVD, and RRCP…VCTP. Intrachain disulfides connect Cys-72-Cys-106, Cys-92-Cys-118, Cys-123-Cys-164, and Cys-150-Cys-177. In terms of domain architecture, HYR spans 178-262; the sequence is VDIDPPKIRC…SCKFIVKVQV (85 aa). Disulfide bonds link Cys-265–Cys-307 and Cys-293–Cys-320.

In terms of assembly, forms homooligomers. Interacts with PLAUR (via the UPAR/Ly6 domains), ADAMTS4 and CTSB. Interacts with HGF; the interaction increases the mitogenic activity of HGF. Post-translationally, contains chondroitin sulfate chains.

It localises to the secreted. It is found in the cytoplasm. Its subcellular location is the cell surface. The protein resides in the synapse. Acts as a ligand for the urokinase plasminogen activator surface receptor. Plays a role in angiogenesis by inducing endothelial cell migration and the formation of vascular network (cords). Involved in cellular migration and adhesion. Increases the phosphorylation levels of FAK. Interacts with and increases the mitogenic activity of HGF. Promotes synapse formation. The sequence is that of Sushi repeat-containing protein SRPX2 from Rattus norvegicus (Rat).